The sequence spans 195 residues: ATP-dependent Clp protease proteolytic subunit (195 aa).

Ser98 (nucleophile) is an active-site residue. His123 is an active-site residue.

Belongs to the peptidase S14 family. Fourteen ClpP subunits assemble into 2 heptameric rings which stack back to back to give a disk-like structure with a central cavity, resembling the structure of eukaryotic proteasomes.

It localises to the cytoplasm. It carries out the reaction Hydrolysis of proteins to small peptides in the presence of ATP and magnesium. alpha-casein is the usual test substrate. In the absence of ATP, only oligopeptides shorter than five residues are hydrolyzed (such as succinyl-Leu-Tyr-|-NHMec, and Leu-Tyr-Leu-|-Tyr-Trp, in which cleavage of the -Tyr-|-Leu- and -Tyr-|-Trp bonds also occurs).. Functionally, cleaves peptides in various proteins in a process that requires ATP hydrolysis. Has a chymotrypsin-like activity. Plays a major role in the degradation of misfolded proteins. The protein is ATP-dependent Clp protease proteolytic subunit of Helicobacter pylori (strain Shi470).